The primary structure comprises 784 residues: Ribosome biogenesis protein BOP1 homolog (784 aa).

A compositionally biased stretch (basic residues) spans 1–11; that stretch reads MTKKLALKRKG. A disordered region spans residues 1-159; sequence MTKKLALKRK…DSDTSDEEDI (159 aa). Composition is skewed to acidic residues over residues 27-36, 45-54, 62-73, and 84-111; these read SENEEEEEDL, EDSTDDEGID, SEELQFESDEEG, and AEEDEESSDEDDDGEEESSDEEEVEDEE. Over residues 112–123 the composition is skewed to basic and acidic residues; the sequence is KDSKLKQSDDKP. Over residues 124–133 the composition is skewed to low complexity; the sequence is SSSGAASKKA. The span at 138–148 shows a compositional bias: basic and acidic residues; the sequence is LSKRDTSKPEY. Positions 149–158 are enriched in acidic residues; that stretch reads QDSDTSDEED. WD repeat units lie at residues 445–486, 488–526, 570–612, 615–653, 656–695, 699–738, and 754–784; these read GHTD…RTIE, DEVVRCVAWCPNPKLSIIAVATGNRLLLVNPKVGDKVLV, THFK…SQIP, KSKGLIQFVLFHPVKPCFFVATQHNIRIYDLVKQELVKK, TNSKWISGMSIHPKGDNLLVSTYDKKMLWFDLDLSTKPYQ, LHRNAVRSVAFHLRYPLFASGSDDQAVIVSHGMVYNDLLQ, and RDEFGVLDVNWHPVQPWVFSTGADSTIRLYT.

It belongs to the WD repeat BOP1/ERB1 family.

The protein localises to the nucleus. It localises to the nucleolus. The protein resides in the nucleoplasm. In terms of biological role, required for maturation of ribosomal RNAs and formation of the large ribosomal subunit. The polypeptide is Ribosome biogenesis protein BOP1 homolog (Drosophila erecta (Fruit fly)).